A 156-amino-acid polypeptide reads, in one-letter code: Radiation-inducible immediate-early gene IEX-1 (156 aa).

A disordered region spans residues 1 to 62; sequence MCHSRSCHPT…SASRGHRKRS (62 aa). Topologically, residues 1 to 82 are cytoplasmic; the sequence is MCHSRSCHPT…RQLPVEEPNP (82 aa). At Thr18 the chain carries Phosphothreonine; by MAPK1. A Phosphoserine modification is found at Ser31. A compositionally biased stretch (low complexity) spans 44–55; sequence PAAAPAGRPSAS. The helical; Signal-anchor for type II membrane protein transmembrane segment at 83 to 99 threads the bilayer; sequence AKRLLFLLLTIVFCQIL. Topologically, residues 100 to 156 are extracellular; it reads MAEEGVPAPLPPEDAPNAASLAPTPVSAVLEPFNLTSEPSDYALDLSTFLQQHPAAF. Thr123 is subject to Phosphothreonine; by MAPK1. Position 126 is a phosphoserine; by MAPK1 (Ser126). N-linked (GlcNAc...) asparagine glycosylation is present at Asn133.

The protein belongs to the IER3 family. In terms of assembly, interacts with the PPP2R5C-PP2A holoenzyme and ERK kinases; regulates ERK dephosphorylation. In terms of processing, phosphorylated at Thr-18, Thr-123 and Ser-126 by MAPK1/ERK2 and probably MAPK3/ERK1. Upon phosphorylation by MAPK1/ERK2 and MAPK3/ERK1, acquires the ability to inhibit cell death induced by various stimuli. Post-translationally, glycosylated.

The protein localises to the membrane. Its function is as follows. May play a role in the ERK signaling pathway by inhibiting the dephosphorylation of ERK by phosphatase PP2A-PPP2R5C holoenzyme. Also acts as an ERK downstream effector mediating survival. As a member of the NUPR1/RELB/IER3 survival pathway, may provide pancreatic ductal adenocarcinoma with remarkable resistance to cell stress, such as starvation or gemcitabine treatment. In Homo sapiens (Human), this protein is Radiation-inducible immediate-early gene IEX-1 (IER3).